The sequence spans 190 residues: uncharacterized protein (190 aa).

Positions 1–18 are cleaved as a signal peptide; it reads MKLVHMASGLAVAIALAA. Cys19 carries the N-palmitoyl cysteine lipid modification. Cys19 carries S-diacylglycerol cysteine lipidation. The span at 162 to 182 shows a compositional bias: low complexity; the sequence is ASGGATTTVPSTSPTQVNPSS. Residues 162–190 are disordered; it reads ASGGATTTVPSTSPTQVNPSSAVPAPTQY.

The protein resides in the cell membrane. This is an uncharacterized protein from Escherichia coli (strain K12).